Here is a 351-residue protein sequence, read N- to C-terminus: Biotin synthase (351 aa).

Positions 58 to 285 (NTVQLSTLLS…RAMVRLSAGR (228 aa)) constitute a Radical SAM core domain. Positions 73, 77, and 80 each coordinate [4Fe-4S] cluster. Positions 117, 148, 208, and 280 each coordinate [2Fe-2S] cluster.

This sequence belongs to the radical SAM superfamily. Biotin synthase family. Homodimer. [4Fe-4S] cluster is required as a cofactor. [2Fe-2S] cluster serves as cofactor.

The catalysed reaction is (4R,5S)-dethiobiotin + (sulfur carrier)-SH + 2 reduced [2Fe-2S]-[ferredoxin] + 2 S-adenosyl-L-methionine = (sulfur carrier)-H + biotin + 2 5'-deoxyadenosine + 2 L-methionine + 2 oxidized [2Fe-2S]-[ferredoxin]. Its pathway is cofactor biosynthesis; biotin biosynthesis; biotin from 7,8-diaminononanoate: step 2/2. Functionally, catalyzes the conversion of dethiobiotin (DTB) to biotin by the insertion of a sulfur atom into dethiobiotin via a radical-based mechanism. The protein is Biotin synthase of Paraburkholderia phymatum (strain DSM 17167 / CIP 108236 / LMG 21445 / STM815) (Burkholderia phymatum).